The chain runs to 470 residues: 3-oxo-isoapionate kinase (470 aa).

Residues D30 and R78 each contribute to the substrate site. Residues S291, 403–406, and G451 contribute to the ATP site; that span reads GGDS.

The protein belongs to the four-carbon acid sugar kinase family.

The catalysed reaction is 3-oxoisoapionate + ATP = 3-oxoisoapionate 4-phosphate + ADP + H(+). It functions in the pathway carbohydrate metabolism. Involved in catabolism of D-apiose. Catalyzes the phosphorylation of 3-oxo-isoapionate to 3-oxo-isoapionate 4-phosphate. The chain is 3-oxo-isoapionate kinase from Paraburkholderia graminis (strain ATCC 700544 / DSM 17151 / LMG 18924 / NCIMB 13744 / C4D1M).